The following is a 406-amino-acid chain: N-acetylmuramoyl-L-alanine amidase CwlM (406 aa).

2 peptidoglycan-binding domain regions span residues Ser18–Leu83 and Gly105–Leu160. Residues Ile193 to Lys370 enclose the MurNAc-LAA domain.

This sequence belongs to the N-acetylmuramoyl-L-alanine amidase 3 family.

It localises to the periplasm. It carries out the reaction Hydrolyzes the link between N-acetylmuramoyl residues and L-amino acid residues in certain cell-wall glycopeptides.. It participates in cell wall degradation; peptidoglycan degradation. Functionally, cell-wall hydrolase that hydrolyzes the amide bond between N-acetylmuramic acid and L-alanine in cell-wall glycopeptides. Is able to lyse whole mycobacteria, release peptidoglycan from the cell wall of M.luteus and M.smegmatis, and cleave N-acetylmuramoyl-L-alanyl-D-isoglutamine, releasing free N-acetylmuramic acid and dipeptide. This is N-acetylmuramoyl-L-alanine amidase CwlM from Mycobacterium tuberculosis (strain ATCC 25618 / H37Rv).